Reading from the N-terminus, the 261-residue chain is uncharacterized protein (261 aa).

It belongs to the BtpA family.

This is an uncharacterized protein from Thermococcus kodakarensis (strain ATCC BAA-918 / JCM 12380 / KOD1) (Pyrococcus kodakaraensis (strain KOD1)).